The chain runs to 248 residues: MALDLAEYDRLARLGVAQFWDGRSSALENDEERSQGGERSGVLGGRNMDGFLAMIEGIVRKNGLPDAEVCIKGRPNLTLPGYYRPTKLWDVLVFDGKKLVAAVELKSHVGPSFGNNFNNRAEEAIGTAHDLATAIREGILGDQLPPFTGWLILVEDCEKSKRAVRDSSPHFPVFPDFKGASYLTRYEVLCRKLILKGFTPRPQSLLRPALRVLGATIASFRKPRVCAHLRHGWPAMYPVGQSRIRVNF.

It belongs to the XhoI type II restriction endonuclease family.

The enzyme catalyses Endonucleolytic cleavage of DNA to give specific double-stranded fragments with terminal 5'-phosphates.. Its function is as follows. A P subtype restriction enzyme that recognizes the double-stranded sequence 5'-CTCGAG-3' and cleaves after C-1. The sequence is that of Type II restriction enzyme XhoI from Xanthomonas vasicola.